The sequence spans 717 residues: Patatin-like phospholipase domain-containing protein PGUG_03164 (717 aa).

Residues Trp123–Val143 form a helical membrane-spanning segment. One can recognise a PNPLA domain in the interval Leu298 to Lys490. Positions Gly329–Gly333 match the GXSXG motif. Catalysis depends on Ser331, which acts as the Nucleophile. Asp477 (proton acceptor) is an active-site residue. A disordered region spans residues Tyr680–Asp717. Acidic residues predominate over residues Asp704 to Asp717.

Belongs to the PLPL family.

It localises to the membrane. Probable lipid hydrolase. This Meyerozyma guilliermondii (strain ATCC 6260 / CBS 566 / DSM 6381 / JCM 1539 / NBRC 10279 / NRRL Y-324) (Yeast) protein is Patatin-like phospholipase domain-containing protein PGUG_03164.